The following is a 681-amino-acid chain: uncharacterized protein (681 aa).

The protein in the N-terminal section; belongs to the purine/pyrimidine phosphoribosyltransferase family.

This is an uncharacterized protein from Mycobacterium tuberculosis (strain CDC 1551 / Oshkosh).